Reading from the N-terminus, the 425-residue chain is Enolase (425 aa).

Glutamine 163 contacts (2R)-2-phosphoglycerate. The Proton donor role is filled by glutamate 205. Residues aspartate 242, glutamate 286, and aspartate 313 each coordinate Mg(2+). Lysine 338, arginine 367, serine 368, and lysine 389 together coordinate (2R)-2-phosphoglycerate. The active-site Proton acceptor is lysine 338.

This sequence belongs to the enolase family. Requires Mg(2+) as cofactor.

It localises to the cytoplasm. It is found in the secreted. Its subcellular location is the cell surface. The catalysed reaction is (2R)-2-phosphoglycerate = phosphoenolpyruvate + H2O. Its pathway is carbohydrate degradation; glycolysis; pyruvate from D-glyceraldehyde 3-phosphate: step 4/5. Catalyzes the reversible conversion of 2-phosphoglycerate (2-PG) into phosphoenolpyruvate (PEP). It is essential for the degradation of carbohydrates via glycolysis. This Lactobacillus delbrueckii subsp. bulgaricus (strain ATCC 11842 / DSM 20081 / BCRC 10696 / JCM 1002 / NBRC 13953 / NCIMB 11778 / NCTC 12712 / WDCM 00102 / Lb 14) protein is Enolase.